The following is a 534-amino-acid chain: Zinc finger protein 671 (534 aa).

Residues Val-49–Glu-120 form the KRAB domain. The C2H2-type 1; degenerate zinc-finger motif lies at Tyr-192–Pro-214. 9 C2H2-type zinc fingers span residues His-285–His-307, Tyr-313–His-335, Tyr-341–His-363, Tyr-369–His-391, Tyr-397–His-419, Tyr-425–His-447, Tyr-451–His-473, Tyr-479–His-501, and Tyr-507–His-529.

It belongs to the krueppel C2H2-type zinc-finger protein family.

It localises to the nucleus. Functionally, may be involved in transcriptional regulation. This Homo sapiens (Human) protein is Zinc finger protein 671 (ZNF671).